The sequence spans 372 residues: Protein phosphatase Mn(2+)-dependent 1K (372 aa).

The N-terminal 29 residues, 1–29 (MSTAALLTLVRSGGNQVRRRVLLRARGLQ), are a transit peptide targeting the mitochondrion. A critical for association with the BCKDH complex region spans residues 46–61 (KWSRFDPDGSGRPATW). Positions 94 to 346 (NVGSASQIGK…DNTTAVVVPF (253 aa)) constitute a PPM-type phosphatase domain. Residues Asp127 and Gly128 each contribute to the Mn(2+) site. Ser248 carries the phosphoserine modification. 2 residues coordinate Mn(2+): Asp298 and Asp337.

Belongs to the PP2C family. Monomer. Interacts with E1 and E2 components of the branched-chain alpha-ketoacid dehydrogenase (BCKDH) complex; this interaction requires colocalization in mitochondria. Interacts with BCKDHA but not with BCKDHB of the E1 component. Interacts with the 24-meric E2 core composed of DBT monomers with a 24:1 stoichiometry; the N-terminal region (residues 49-61) of PPM1K and C-terminal linker of the lipoyl domain of DBT (residues 145-160) are critical for this interaction, whereas the lipoyl prosthetic group is dispensable. Competes with BCKDK for binding to the E2 core; this interaction is modulated by branched-chain alpha-keto acids. At steady state, BCKDH holoenzyme preferentially binds BCKDK and BCKDHA is phosphorylated. In response to high levels of branched-chain alpha-keto acids, the inhibitory BCKDK is replaced by activating PPM1K leading to BCKDHA dephosphorylation and BCAA degradation. Mn(2+) serves as cofactor.

It localises to the mitochondrion matrix. The catalysed reaction is O-phospho-L-seryl-[3-methyl-2-oxobutanoate dehydrogenase] + H2O = L-seryl-[3-methyl-2-oxobutanoate dehydrogenase] + phosphate. It catalyses the reaction O-phospho-L-seryl-[protein] + H2O = L-seryl-[protein] + phosphate. It participates in protein modification. In terms of biological role, serine/threonine-protein phosphatase component of macronutrients metabolism. Forms a functional kinase and phosphatase pair with BCKDK, serving as a metabolic regulatory node that coordinates branched-chain amino acids (BCAAs) with glucose and lipid metabolism via two distinct phosphoprotein targets: mitochondrial BCKDHA subunit of the branched-chain alpha-ketoacid dehydrogenase (BCKDH) complex and cytosolic ACLY, a lipogenic enzyme of Krebs cycle. At high levels of branched-chain ketoacids, dephosphorylates and activates mitochondrial BCKDH complex, a multisubunit complex consisting of three multimeric components each involved in different steps of BCAA catabolism: E1 composed of BCKDHA and BCKDHB, E2 core composed of DBT monomers, and E3 composed of DLD monomers. Tightly associates with the E2 component of BCKDH complex and dephosphorylates BCKDHA on Ser-347. Regulates the reversible phosphorylation of ACLY in response to changes in cellular carbohydrate abundance such as occurs during fasting to feeding metabolic transition. At fasting state, appears to dephosphorylate ACLY on Ser-455 and inactivate it. Refeeding stimulates MLXIPL/ChREBP transcription factor, leading to increased BCKDK to PPM1K expression ratio, phosphorylation and activation of ACLY that ultimately results in the generation of malonyl-CoA and oxaloacetate immediate substrates of de novo lipogenesis and gluconeogenesis, respectively. Recognizes phosphosites having SxS or RxxS motifs and strictly depends on Mn(2+) ions for the phosphatase activity. Regulates Ca(2+)-induced opening of mitochondrial transition pore and apoptotic cell death. The protein is Protein phosphatase Mn(2+)-dependent 1K (PPM1K) of Bos taurus (Bovine).